Consider the following 298-residue polypeptide: Putative S-adenosyl-L-methionine-dependent methyltransferase MAV_0778 (298 aa).

S-adenosyl-L-methionine is bound by residues Asp-124 and 153–154 (DL).

This sequence belongs to the UPF0677 family.

In terms of biological role, exhibits S-adenosyl-L-methionine-dependent methyltransferase activity. In Mycobacterium avium (strain 104), this protein is Putative S-adenosyl-L-methionine-dependent methyltransferase MAV_0778.